Reading from the N-terminus, the 269-residue chain is Glutamate 5-kinase 2 (269 aa).

Position 16 (K16) interacts with ATP. Substrate contacts are provided by S57, D144, and N156. 218-224 (SGGMISK) contributes to the ATP binding site.

It belongs to the glutamate 5-kinase family.

The protein resides in the cytoplasm. It carries out the reaction L-glutamate + ATP = L-glutamyl 5-phosphate + ADP. It participates in amino-acid biosynthesis; L-proline biosynthesis; L-glutamate 5-semialdehyde from L-glutamate: step 1/2. Catalyzes the transfer of a phosphate group to glutamate to form L-glutamate 5-phosphate. The polypeptide is Glutamate 5-kinase 2 (Rhizobium meliloti (strain 1021) (Ensifer meliloti)).